The chain runs to 146 residues: Leghemoglobin-3 (146 aa).

Residues 2 to 146 (GFTDKQEALV…LATAIKKAMV (145 aa)) form the Globin domain. Y29 is subject to Nitrated tyrosine. Position 44 (S44) interacts with heme b. S44 bears the Phosphoserine mark. H61 is an O2 binding site. Residues K64, H93, and K96 each coordinate heme b. Y134 carries the nitrated tyrosine modification.

The protein belongs to the plant globin family. In terms of assembly, monomer. Post-translationally, nitrated in effective nodules and particularly in hypoxic conditions; this mechanism may play a protective role in the symbiosis by buffering toxic peroxynitrite NO(2)(-). Nitration level decrease during nodule senescence. Phosphorylation at Ser-44 disrupts the molecular environment of its porphyrin ring oxygen binding pocket, thus leading to a reduced oxygen consumption and to the delivery of oxygen O(2) to symbiosomes. Root nodules.

Its subcellular location is the cytoplasm. It localises to the cytosol. The protein resides in the nucleus. Functionally, leghemoglobin that reversibly binds oxygen O(2) through a pentacoordinated heme iron. In root nodules, facilitates the diffusion of oxygen to the bacteroids while preventing the bacterial nitrogenase from being inactivated by buffering dioxygen, nitric oxide and carbon monoxide, and promoting the formation of reactive oxygen species (ROS, e.g. H(2)O(2)). This role is essential for symbiotic nitrogen fixation (SNF). The chain is Leghemoglobin-3 from Medicago sativa (Alfalfa).